We begin with the raw amino-acid sequence, 317 residues long: Acetyl-coenzyme A carboxylase carboxyl transferase subunit alpha (317 aa).

Positions 39–293 (KLEAKAQKAL…KEAVVEALGA (255 aa)) constitute a CoA carboxyltransferase C-terminal domain.

It belongs to the AccA family. Acetyl-CoA carboxylase is a heterohexamer composed of biotin carboxyl carrier protein (AccB), biotin carboxylase (AccC) and two subunits each of ACCase subunit alpha (AccA) and ACCase subunit beta (AccD).

The protein localises to the cytoplasm. It catalyses the reaction N(6)-carboxybiotinyl-L-lysyl-[protein] + acetyl-CoA = N(6)-biotinyl-L-lysyl-[protein] + malonyl-CoA. It participates in lipid metabolism; malonyl-CoA biosynthesis; malonyl-CoA from acetyl-CoA: step 1/1. Component of the acetyl coenzyme A carboxylase (ACC) complex. First, biotin carboxylase catalyzes the carboxylation of biotin on its carrier protein (BCCP) and then the CO(2) group is transferred by the carboxyltransferase to acetyl-CoA to form malonyl-CoA. The chain is Acetyl-coenzyme A carboxylase carboxyl transferase subunit alpha from Beijerinckia indica subsp. indica (strain ATCC 9039 / DSM 1715 / NCIMB 8712).